The following is a 161-amino-acid chain: Cytochrome b6-f complex subunit 4 (161 aa).

Helical transmembrane passes span 37–57 (LLYI…GLAV), 96–116 (LLGV…PFIE), and 132–152 (SVFL…TLPI).

Belongs to the cytochrome b family. PetD subfamily. As to quaternary structure, the 4 large subunits of the cytochrome b6-f complex are cytochrome b6, subunit IV (17 kDa polypeptide, PetD), cytochrome f and the Rieske protein, while the 4 small subunits are PetG, PetL, PetM and PetN. The complex functions as a dimer.

Its subcellular location is the cellular thylakoid membrane. In terms of biological role, component of the cytochrome b6-f complex, which mediates electron transfer between photosystem II (PSII) and photosystem I (PSI), cyclic electron flow around PSI, and state transitions. This is Cytochrome b6-f complex subunit 4 from Acaryochloris marina (strain MBIC 11017).